The primary structure comprises 644 residues: 1-deoxy-D-xylulose-5-phosphate synthase (644 aa).

Residues His-78 and 120 to 122 (GHA) each bind thiamine diphosphate. Asp-150 provides a ligand contact to Mg(2+). Thiamine diphosphate contacts are provided by residues 151-152 (AA), Asn-179, and Glu-374. Asn-179 contributes to the Mg(2+) binding site.

The protein belongs to the transketolase family. DXPS subfamily. As to quaternary structure, homodimer. Mg(2+) is required as a cofactor. Thiamine diphosphate serves as cofactor.

It carries out the reaction D-glyceraldehyde 3-phosphate + pyruvate + H(+) = 1-deoxy-D-xylulose 5-phosphate + CO2. It participates in metabolic intermediate biosynthesis; 1-deoxy-D-xylulose 5-phosphate biosynthesis; 1-deoxy-D-xylulose 5-phosphate from D-glyceraldehyde 3-phosphate and pyruvate: step 1/1. In terms of biological role, catalyzes the acyloin condensation reaction between C atoms 2 and 3 of pyruvate and glyceraldehyde 3-phosphate to yield 1-deoxy-D-xylulose-5-phosphate (DXP). The protein is 1-deoxy-D-xylulose-5-phosphate synthase of Chlamydia pneumoniae (Chlamydophila pneumoniae).